The sequence spans 194 residues: dCTP deaminase (194 aa).

DCTP contacts are provided by residues 110–115 (RSSLAR), D128, 136–138 (VLE), Y171, K178, and Q182. Residue E138 is the Proton donor/acceptor of the active site.

It belongs to the dCTP deaminase family. In terms of assembly, homotrimer.

It catalyses the reaction dCTP + H2O + H(+) = dUTP + NH4(+). It participates in pyrimidine metabolism; dUMP biosynthesis; dUMP from dCTP (dUTP route): step 1/2. Its function is as follows. Catalyzes the deamination of dCTP to dUTP. This is dCTP deaminase from Mannheimia succiniciproducens (strain KCTC 0769BP / MBEL55E).